The chain runs to 397 residues: Cercosporin biosynthesis regulatory protein CTB8 (397 aa).

The segment at residues 26–53 is a DNA-binding region (zn(2)-C6 fungal-type); that stretch reads CTHCSSQKIRCTKERPACARCVNKGLLC. Disordered stretches follow at residues 62 to 92 and 173 to 198; these read GTRR…DSVK and AEAS…ATTH. Over residues 74–87 the composition is skewed to polar residues; the sequence is PETTISNAPTSSVP. Low complexity predominate over residues 179-197; the sequence is PSSSSSPPSQRSDGGRATT.

The protein localises to the nucleus. Transcription regulator of the gene cluster that mediates the biosynthesis of cercosporin, a light-activated, non-host-selective toxin. The perylenequinone chromophore of cercosporin absorbs light energy to attain an electronically-activated triplet state and produces active oxygen species such as the hydroxyl radical, superoxide, hydrogen peroxide or singlet oxygen upon reaction with oxygen molecules. These reactive oxygen species cause damage to various cellular components including lipids, proteins and nucleic acids. The polypeptide is Cercosporin biosynthesis regulatory protein CTB8 (Cercospora nicotianae (Barn spot disease fungus)).